The primary structure comprises 428 residues: Adenylosuccinate synthetase (428 aa).

GTP is bound by residues 12–18 and 40–42; these read GDEGKGK and GHT. Catalysis depends on Asp13, which acts as the Proton acceptor. Residues Asp13 and Gly40 each contribute to the Mg(2+) site. IMP contacts are provided by residues 13 to 16, 38 to 41, Thr130, Arg144, Gln225, Thr240, and Arg304; these read DEGK and NAGH. His41 serves as the catalytic Proton donor. Residue 300-306 participates in substrate binding; the sequence is VTTGRAR. GTP is bound by residues Arg306, 332 to 334, and 414 to 416; these read KID and SVG.

Belongs to the adenylosuccinate synthetase family. As to quaternary structure, homodimer. It depends on Mg(2+) as a cofactor.

It is found in the cytoplasm. The enzyme catalyses IMP + L-aspartate + GTP = N(6)-(1,2-dicarboxyethyl)-AMP + GDP + phosphate + 2 H(+). It participates in purine metabolism; AMP biosynthesis via de novo pathway; AMP from IMP: step 1/2. Its function is as follows. Plays an important role in the de novo pathway of purine nucleotide biosynthesis. Catalyzes the first committed step in the biosynthesis of AMP from IMP. The protein is Adenylosuccinate synthetase of Clostridium botulinum (strain 657 / Type Ba4).